The primary structure comprises 65 residues: Myotoxin-1 (65 aa).

An N-terminal signal peptide occupies residues 1 to 22 (MKILYLLFAFLFLAFLSEPGNA). 3 cysteine pairs are disulfide-bonded: C26–C58, C33–C52, and C40–C59.

It belongs to the crotamine-myotoxin family. In terms of assembly, monomer. Expressed by the venom gland.

The protein localises to the secreted. Its function is as follows. Cationic peptide that possesses multiple functions. It acts as a cell-penetrating peptide (CPP), and as a potent voltage-gated potassium channel (Kv) inhibitor. It exhibits antimicrobial activities, hind limb paralysis, and severe muscle necrosis by a non-enzymatic mechanism. The polypeptide is Myotoxin-1 (Crotalus durissus terrificus (South American rattlesnake)).